The primary structure comprises 419 residues: uncharacterized protein (419 aa).

7 consecutive transmembrane segments (helical) span residues 16 to 36 (IMAKSFIISTVITVLLVLVVT), 186 to 206 (LVYIMLFVIYFSVIMYASMIA), 235 to 255 (LLGIGLVGITQLAIIIGAGSL), 283 to 303 (VIYAVIFFLLGYFLYATLAAF), 318 to 338 (ITPMTLLVVAGFMIAMFGLNA), 340 to 360 (DAGFITVTSFIPFFTPMIMFL), and 369 to 389 (FWQAAVGIGITLLTIVILAVI).

To M.jannaschii MJ1024.

It is found in the cell membrane. This is an uncharacterized protein from Bacillus subtilis (strain 168).